The chain runs to 263 residues: 3-methyl-2-oxobutanoate hydroxymethyltransferase (263 aa).

Mg(2+) contacts are provided by aspartate 45 and aspartate 84. Residues 45-46, aspartate 84, and lysine 112 each bind 3-methyl-2-oxobutanoate; that span reads DS. Glutamate 114 is a Mg(2+) binding site. Glutamate 181 functions as the Proton acceptor in the catalytic mechanism.

Belongs to the PanB family. Homodecamer; pentamer of dimers. It depends on Mg(2+) as a cofactor.

The protein resides in the cytoplasm. The enzyme catalyses 3-methyl-2-oxobutanoate + (6R)-5,10-methylene-5,6,7,8-tetrahydrofolate + H2O = 2-dehydropantoate + (6S)-5,6,7,8-tetrahydrofolate. Its pathway is cofactor biosynthesis; (R)-pantothenate biosynthesis; (R)-pantoate from 3-methyl-2-oxobutanoate: step 1/2. Catalyzes the reversible reaction in which hydroxymethyl group from 5,10-methylenetetrahydrofolate is transferred onto alpha-ketoisovalerate to form ketopantoate. The chain is 3-methyl-2-oxobutanoate hydroxymethyltransferase from Buchnera aphidicola subsp. Acyrthosiphon pisum (strain APS) (Acyrthosiphon pisum symbiotic bacterium).